The following is a 1079-amino-acid chain: Zn(2)-C6 fungal-type transcription factor FTF1a (1079 aa).

Positions 177–204 (CIACRRKKIRCSGEKPACKQCLHSCIPC) form a DNA-binding region, zn(2)-C6 fungal-type.

The protein localises to the nucleus. Its function is as follows. Zn(2)-C6 fungal-type transcription factor that has a role in the establishment of the fungus within the plant and/or the progress of the disease. Regulates the expression of virulence factors such as SIX1 and SIX6. This Fusarium oxysporum f. sp. lycopersici (strain 4287 / CBS 123668 / FGSC 9935 / NRRL 34936) (Fusarium vascular wilt of tomato) protein is Zn(2)-C6 fungal-type transcription factor FTF1a.